A 394-amino-acid polypeptide reads, in one-letter code: G2/mitotic-specific cyclin-B (394 aa).

The disordered stretch occupies residues 360–394 (QSHPSPNSRLDQEEDMASSKFMSDQQATQELKSIR). Residues 379 to 394 (KFMSDQQATQELKSIR) are compositionally biased toward polar residues.

This sequence belongs to the cyclin family. Cyclin AB subfamily. In terms of assembly, interacts with the CDK1 protein kinase to form a serine/threonine kinase holoenzyme complex also known as maturation promoting factor (MPF). The cyclin subunit imparts substrate specificity to the complex.

In terms of biological role, essential for the control of the cell cycle at the G2/M (mitosis) transition. The sequence is that of G2/mitotic-specific cyclin-B from Patiria pectinifera (Starfish).